A 304-amino-acid chain; its full sequence is MAKYTPNELADTLKEGLLSFPVTSFDANLQFDEENYRKHLAWQASFPVAGLFAAGGTGEGFSLTPAESERVVRTAVDEVGSRVPVLASAGGSTAQAIENAKAAEAAGADGILLLPPYLTEADQAGLVEHVSAVCRATSLGVIIYNRANAIYKDTTVATLADRHANLIGFKDGVGDLEHDARVYAKLGDRLFYLGGLPTAETFALPLLQLGMSTYSSAMYNFVPQFALDFYQDVRNQDRAAVNKKLNDFVIPYLDIRDRVKGYSVSIVKGGLDAIGRSAGPVRTPLQNLAPQDLADLKALIATVS.

The protein belongs to the DapA family.

The catalysed reaction is 5-dehydro-4-deoxy-D-glucarate + H(+) = 2,5-dioxopentanoate + CO2 + H2O. It participates in carbohydrate acid metabolism; D-glucarate degradation; 2,5-dioxopentanoate from D-glucarate: step 2/2. The chain is Probable 5-dehydro-4-deoxyglucarate dehydratase from Pseudarthrobacter chlorophenolicus (strain ATCC 700700 / DSM 12829 / CIP 107037 / JCM 12360 / KCTC 9906 / NCIMB 13794 / A6) (Arthrobacter chlorophenolicus).